The following is a 640-amino-acid chain: Threonine--tRNA ligase (640 aa).

One can recognise a TGS domain in the interval 1–61 (MPIITLPNGD…TEDSTLQIIT (61 aa)). Residues 242-533 (DHRKIGKALD…LIEHYAGFMP (292 aa)) are catalytic. Zn(2+) is bound by residues C333, H384, and H510.

Belongs to the class-II aminoacyl-tRNA synthetase family. In terms of assembly, homodimer. Zn(2+) is required as a cofactor.

It is found in the cytoplasm. The enzyme catalyses tRNA(Thr) + L-threonine + ATP = L-threonyl-tRNA(Thr) + AMP + diphosphate + H(+). In terms of biological role, catalyzes the attachment of threonine to tRNA(Thr) in a two-step reaction: L-threonine is first activated by ATP to form Thr-AMP and then transferred to the acceptor end of tRNA(Thr). Also edits incorrectly charged L-seryl-tRNA(Thr). The protein is Threonine--tRNA ligase of Acinetobacter baumannii (strain AB0057).